The sequence spans 102 residues: uncharacterized protein (102 aa).

A helical membrane pass occupies residues 7 to 23; sequence IVFVSCVILGLAACSSQ.

The protein resides in the membrane. This is an uncharacterized protein from Haemophilus influenzae (strain ATCC 51907 / DSM 11121 / KW20 / Rd).